A 362-amino-acid chain; its full sequence is Methylthioribose-1-phosphate isomerase (362 aa).

Catalysis depends on D252, which acts as the Proton donor.

It belongs to the eIF-2B alpha/beta/delta subunits family. MtnA subfamily.

Its subcellular location is the cytoplasm. It localises to the nucleus. It carries out the reaction 5-(methylsulfanyl)-alpha-D-ribose 1-phosphate = 5-(methylsulfanyl)-D-ribulose 1-phosphate. The protein operates within amino-acid biosynthesis; L-methionine biosynthesis via salvage pathway; L-methionine from S-methyl-5-thio-alpha-D-ribose 1-phosphate: step 1/6. In terms of biological role, catalyzes the interconversion of methylthioribose-1-phosphate (MTR-1-P) into methylthioribulose-1-phosphate (MTRu-1-P). In Drosophila persimilis (Fruit fly), this protein is Methylthioribose-1-phosphate isomerase.